A 453-amino-acid chain; its full sequence is Secreted aspartic protease 10 (453 aa).

Residues 1 to 20 (MDLVIMNFVFLLYLTSVVKC) form the signal peptide. Residues 52 to 372 (YTTELEIGSN…DLQDMTISVA (321 aa)) enclose the Peptidase A1 domain. Residue aspartate 70 is part of the active site. A pepstatin A-binding site is contributed by 70 to 72 (DTG). A disulfide bridge connects residues cysteine 85 and cysteine 112. Asparagine 115 and asparagine 128 each carry an N-linked (GlcNAc...) asparagine glycan. 138–139 (VD) is a pepstatin A binding site. N-linked (GlcNAc...) asparagine glycosylation is found at asparagine 168, asparagine 208, asparagine 211, and asparagine 245. Aspartate 266 is an active-site residue. 266-270 (DTGST) contributes to the pepstatin A binding site. Asparagine 287 is a glycosylation site (N-linked (GlcNAc...) asparagine). Cysteine 301 and cysteine 333 are joined by a disulfide. A disordered region spans residues 387-432 (NPNEDQNEVPTSTSFTQSASSSGSQPSSTISGENMDKNTTSSSSGN). Residues 397-417 (TSTSFTQSASSSGSQPSSTIS) show a composition bias toward low complexity. The span at 423–432 (KNTTSSSSGN) shows a compositional bias: polar residues. A glycan (N-linked (GlcNAc...) asparagine) is linked at asparagine 424. Serine 429 carries the GPI-anchor amidated serine lipid modification. Residues 430–453 (SGNCQTRSWIAILSALFLVYIHII) constitute a propeptide, removed in mature form.

Belongs to the peptidase A1 family. Post-translationally, the GPI-anchor is attached to the protein in the endoplasmic reticulum and serves to target the protein to the cell surface. There, the glucosamine-inositol phospholipid moiety is cleaved off and the GPI-modified mannoprotein is covalently attached via its lipidless GPI glycan remnant to the 1,6-beta-glucan of the outer cell wall layer.

Its subcellular location is the secreted. It localises to the cell membrane. It carries out the reaction Preferential cleavage at the carboxyl of hydrophobic amino acids, but fails to cleave 15-Leu-|-Tyr-16, 16-Tyr-|-Leu-17 and 24-Phe-|-Phe-25 of insulin B chain. Activates trypsinogen, and degrades keratin.. Its function is as follows. Secreted aspartic peptidases (SAPs) are a group of ten acidic hydrolases considered as key virulence factors. These enzymes supply the fungus with nutrient amino acids as well as are able to degrade the selected host's proteins involved in the immune defense. Required for cell surface integrity and cell separation during budding. In Candida albicans (strain SC5314 / ATCC MYA-2876) (Yeast), this protein is Secreted aspartic protease 10.